The sequence spans 152 residues: Large ribosomal subunit protein bL9 (152 aa).

It belongs to the bacterial ribosomal protein bL9 family.

Functionally, binds to the 23S rRNA. The protein is Large ribosomal subunit protein bL9 of Mycobacterium marinum (strain ATCC BAA-535 / M).